A 234-amino-acid polypeptide reads, in one-letter code: Thrombin-like enzyme ancrod (234 aa).

A Peptidase S1 domain is found at valine 1 to alanine 227. Cystine bridges form between cysteine 7–cysteine 141, cysteine 28–cysteine 44, cysteine 78–cysteine 232, cysteine 120–cysteine 188, cysteine 152–cysteine 167, and cysteine 178–cysteine 203. Asparagine 23 carries N-linked (GlcNAc...) asparagine glycosylation. The active-site Charge relay system is the histidine 43. Asparagine 79 is a glycosylation site (N-linked (GlcNAc...) asparagine). Aspartate 88 serves as the catalytic Charge relay system. Asparagine 99 and asparagine 148 each carry an N-linked (GlcNAc...) asparagine glycan. Serine 182 functions as the Charge relay system in the catalytic mechanism. Asparagine 229 is a glycosylation site (N-linked (GlcNAc...) asparagine).

The protein belongs to the peptidase S1 family. Snake venom subfamily. In terms of assembly, monomer. As to expression, expressed by the venom gland.

Its subcellular location is the secreted. It carries out the reaction Selective cleavage of Arg-|-Xaa bond in fibrinogen, to form fibrin, and release fibrinopeptide A. The specificity of further degradation of fibrinogen varies with species origin of the enzyme.. Functionally, thrombin-like snake venom serine protease that acts as an anticoagulant. It cleaves fibrinogen (FGA) to split off the A-fibrinopeptides (A, AY and AP), but not the B-fibrinopeptide. The resulting fibrin polymers are imperfectly formed and much smaller in size (1 to 2 um long) than the fibrin polymers produced by the action of thrombin. These ancrod-induced microthrombi are friable, unstable, urea-soluble and have significantly degraded alpha chains. They do not cross-link to form thrombi. They are markedly susceptible to digestion by plasmin and are rapidly removed from circulation by either reticuloendothelial phagocytosis or normal fibrinolysis, or both. Anticoagulation through the removal of fibrinogen from the blood is rapid, occurring within hours following its administration. It does not activate plasminogen and does not degrade preformed, fully cross-linked thrombin fibrin. It also reduces the level of plasminogen activator inhibitor (PAI) and may stimulate the release of tissue plasminogen activator (PLAT) from the endothelium. The profibrinolytic effect of these 2 actions appears to be limited to local microthrombus degradation. In Calloselasma rhodostoma (Malayan pit viper), this protein is Thrombin-like enzyme ancrod.